The primary structure comprises 805 residues: MNVPETRQSSIVVAIRVRPFTSMEKTRLVNEASGAEANFPGLGDSSLILPMSNNSDSDIDIDAEEGSTRSKRNSLLRRKVIRPEGIRKIVDCVDDRMLIFDPADRNPLNKVSDQVLNSMRARATKATASSINNSNATNKFSSQRRRHGGEIKFVFDKLFDETSSQARVYKETTSPLLDSVLDGFNSTVFAYGATGCGKTYTVSGTPSQPGIIFLAMEELFNKITDLKDEKDFEISLSYLEIYNERIRDLLKPETPSKRLVIREDTQNHIKVANLSYHHPNTVEDVMDLVVQGNINRTTSPTEANEVSSRSHAVLQIHIMQTNKLVDLTSQHTFATLSIIDLAGSERAAATRNRGIRLHEGANINRSLLALGNCINALCLNDGSRSCHIPYRDSKLTRLLKFSLGGNCKTVMIVCISPSSSHYDETLNTLKYANRAKEIKTKIIRNQQSLSRHVGSYLKMITEQKRQIEELREREEKMISLKLTKYKLNKEKIQLAINECVNRVQQTYAGVETYQVAKTLKSLILCKRRFLQMVKLEVDNLILLFEREESTAAEMQPVISNCRMISGQLYNKIHELEMKFDETDTLSSVIHQVHSIDLNKLREMEDWDETYDLVYLESCLNQISELQRNEILVNSSIMTEKLMSDPGLNSRFKFLSKWLMNRTPNIESIIQDLVHIDEEFESFARTFIANPDSNFTNTNINIINTTAADLAVPAETLQRQNFSQKKVKWTSPDLSPSPMIEPQPELEPELHQDQDAIASEVDVSMQDTTFNEQGPSTPSAPTTAVPRRKMRSSLLTHQSLLATARK.

The region spanning 10-438 (SIVVAIRVRP…LKYANRAKEI (429 aa)) is the Kinesin motor domain. An ATP-binding site is contributed by 192 to 199 (GATGCGKT). A coiled-coil region spans residues 449-481 (LSRHVGSYLKMITEQKRQIEELREREEKMISLK). Positions 720-805 (NFSQKKVKWT…HQSLLATARK (86 aa)) are disordered. The segment covering 764-773 (MQDTTFNEQG) has biased composition (polar residues). Residues 774–783 (PSTPSAPTTA) are compositionally biased toward low complexity. The segment covering 792–805 (SLLTHQSLLATARK) has biased composition (polar residues).

This sequence belongs to the TRAFAC class myosin-kinesin ATPase superfamily. Kinesin family. Kinesin II subfamily.

The protein resides in the cytoplasm. It is found in the cytoskeleton. This Saccharomyces cerevisiae (strain ATCC 204508 / S288c) (Baker's yeast) protein is Kinesin-like protein KIP3 (KIP3).